The primary structure comprises 172 residues: Translation initiation factor IF-3 (172 aa).

The protein belongs to the IF-3 family. As to quaternary structure, monomer.

The protein resides in the cytoplasm. IF-3 binds to the 30S ribosomal subunit and shifts the equilibrium between 70S ribosomes and their 50S and 30S subunits in favor of the free subunits, thus enhancing the availability of 30S subunits on which protein synthesis initiation begins. The sequence is that of Translation initiation factor IF-3 from Bartonella tribocorum (strain CIP 105476 / IBS 506).